The sequence spans 742 residues: Polyphosphate kinase (742 aa).

Residue Asn-91 participates in ATP binding. Mg(2+) is bound by residues Arg-431 and Arg-461. His-491 acts as the Phosphohistidine intermediate in catalysis. ATP-binding residues include Tyr-524, Arg-624, and His-652. The tract at residues 718-742 (WTASPQEGHSVRDHQESLMERHRSP) is disordered. Residues 726 to 742 (HSVRDHQESLMERHRSP) show a composition bias toward basic and acidic residues.

It belongs to the polyphosphate kinase 1 (PPK1) family. Mg(2+) is required as a cofactor. An intermediate of this reaction is the autophosphorylated ppk in which a phosphate is covalently linked to a histidine residue through a N-P bond.

The enzyme catalyses [phosphate](n) + ATP = [phosphate](n+1) + ADP. Catalyzes the reversible transfer of the terminal phosphate of ATP to form a long-chain polyphosphate (polyP). The sequence is that of Polyphosphate kinase from Mycobacterium bovis (strain ATCC BAA-935 / AF2122/97).